Consider the following 504-residue polypeptide: Cobyric acid synthase (504 aa).

The 197-residue stretch at glutamate 258–tryptophan 454 folds into the GATase cobBQ-type domain. Cysteine 339 serves as the catalytic Nucleophile. Histidine 446 is an active-site residue.

Belongs to the CobB/CobQ family. CobQ subfamily.

It participates in cofactor biosynthesis; adenosylcobalamin biosynthesis. In terms of biological role, catalyzes amidations at positions B, D, E, and G on adenosylcobyrinic A,C-diamide. NH(2) groups are provided by glutamine, and one molecule of ATP is hydrogenolyzed for each amidation. This Prochlorococcus marinus (strain NATL2A) protein is Cobyric acid synthase.